The sequence spans 346 residues: PhoH-like protein (346 aa).

Position 142 to 149 (142 to 149 (GPAGTGKT)) interacts with ATP.

The protein belongs to the PhoH family.

Its subcellular location is the cytoplasm. The chain is PhoH-like protein (ybeZ) from Escherichia coli O157:H7.